Consider the following 876-residue polypeptide: Alanine--tRNA ligase (876 aa).

Lys74 carries the N6-acetyllysine modification. Zn(2+)-binding residues include His564, His568, Cys666, and His670.

The protein belongs to the class-II aminoacyl-tRNA synthetase family. Homotetramer. The cofactor is Zn(2+).

The protein localises to the cytoplasm. It catalyses the reaction tRNA(Ala) + L-alanine + ATP = L-alanyl-tRNA(Ala) + AMP + diphosphate. In terms of biological role, catalyzes the attachment of alanine to tRNA(Ala) in a two-step reaction: alanine is first activated by ATP to form Ala-AMP and then transferred to the acceptor end of tRNA(Ala). Also edits incorrectly charged Ser-tRNA(Ala) and Gly-tRNA(Ala) via its editing domain. The chain is Alanine--tRNA ligase from Escherichia coli O1:K1 / APEC.